The primary structure comprises 400 residues: uncharacterized protein (400 aa).

This is an uncharacterized protein from Saccharomyces cerevisiae (strain ATCC 204508 / S288c) (Baker's yeast).